A 107-amino-acid chain; its full sequence is Large ribosomal subunit protein eL33A (107 aa).

An N-acetylalanine; partial modification is found at alanine 2. Lysine 47 participates in a covalent cross-link: Glycyl lysine isopeptide (Lys-Gly) (interchain with G-Cter in ubiquitin).

It belongs to the eukaryotic ribosomal protein eL33 family. In terms of assembly, component of the large ribosomal subunit (LSU). Mature yeast ribosomes consist of a small (40S) and a large (60S) subunit. The 40S small subunit contains 1 molecule of ribosomal RNA (18S rRNA) and 33 different proteins (encoded by 57 genes). The large 60S subunit contains 3 rRNA molecules (25S, 5.8S and 5S rRNA) and 46 different proteins (encoded by 81 genes). In terms of processing, N-terminally acetylated by acetyltransferase NatA.

Its subcellular location is the cytoplasm. Functionally, component of the ribosome, a large ribonucleoprotein complex responsible for the synthesis of proteins in the cell. The small ribosomal subunit (SSU) binds messenger RNAs (mRNAs) and translates the encoded message by selecting cognate aminoacyl-transfer RNA (tRNA) molecules. The large subunit (LSU) contains the ribosomal catalytic site termed the peptidyl transferase center (PTC), which catalyzes the formation of peptide bonds, thereby polymerizing the amino acids delivered by tRNAs into a polypeptide chain. The nascent polypeptides leave the ribosome through a tunnel in the LSU and interact with protein factors that function in enzymatic processing, targeting, and the membrane insertion of nascent chains at the exit of the ribosomal tunnel. This Saccharomyces cerevisiae (strain ATCC 204508 / S288c) (Baker's yeast) protein is Large ribosomal subunit protein eL33A.